The primary structure comprises 282 residues: Transcription factor LBX1 (282 aa).

Positions 1 to 20 (MTSKEDGKAAPGEERRRSPL) are enriched in basic and acidic residues. The interval 1–36 (MTSKEDGKAAPGEERRRSPLDHLPPPANSNKPLTPF) is disordered. A DNA-binding region (homeobox) is located at residues 125–184 (RRKSRTAFTNHQIYELEKRFLYQKYLSPADRDQIAQQLGLTNAQVITWFQNRRAKLKRDL). The segment at 210–282 (ELEQNSEASG…EEDEEIDVDD (73 aa)) is disordered. Positions 218–227 (SGGGGGGGCG) are enriched in gly residues. A compositionally biased stretch (acidic residues) spans 269–282 (CSEDEEDEEIDVDD).

In terms of assembly, interacts with SKOR1 which acts as a transcriptional corepressor. Expressed in the dorsal part of the spinal cord and hindbrain and in presumptive myogenic cells in lateral regions of differentiating somites.

It localises to the nucleus. Its function is as follows. Transcription factor required for the development of GABAergic interneurons in the dorsal horn of the spinal cord and migration and further development of hypaxial muscle precursor cells for limb muscles, diaphragm and hypoglossal cord. This Mus musculus (Mouse) protein is Transcription factor LBX1 (Lbx1).